Here is a 203-residue protein sequence, read N- to C-terminus: Orotate phosphoribosyltransferase (203 aa).

Residues arginine 94, lysine 98, histidine 100, and 120–128 (EDLISTGGS) each bind 5-phospho-alpha-D-ribose 1-diphosphate. Orotate is bound at residue serine 124.

The protein belongs to the purine/pyrimidine phosphoribosyltransferase family. PyrE subfamily. Homodimer. The cofactor is Mg(2+).

The enzyme catalyses orotidine 5'-phosphate + diphosphate = orotate + 5-phospho-alpha-D-ribose 1-diphosphate. It functions in the pathway pyrimidine metabolism; UMP biosynthesis via de novo pathway; UMP from orotate: step 1/2. Its function is as follows. Catalyzes the transfer of a ribosyl phosphate group from 5-phosphoribose 1-diphosphate to orotate, leading to the formation of orotidine monophosphate (OMP). The protein is Orotate phosphoribosyltransferase of Staphylococcus aureus (strain MSSA476).